The chain runs to 231 residues: MNRLLSVFALGGAVLLAGCVAPTPKPNDPYYAPVLPRTPLPAAANNGSIYQAGFEQNLYSDRKAFRVGDIITITLNERTSASKNAGSQIAKTSKTDIGLTSLFGTTPNTNNPFGGGDLSLEAGYSGDRATKGDSKATQGNTLTGSITVTVAEVLPNGIIAVRGEKWLTLNTGEELVRIAGMIRADDIATDNTVPSTRVADARITYSGTGSFADASQPGWLDRFFISPLWPF.

Positions 1-18 (MNRLLSVFALGGAVLLAG) are cleaved as a signal peptide. Residue Cys-19 is the site of N-palmitoyl cysteine attachment. Cys-19 carries the S-diacylglycerol cysteine lipid modification.

Belongs to the FlgH family. As to quaternary structure, the basal body constitutes a major portion of the flagellar organelle and consists of four rings (L,P,S, and M) mounted on a central rod.

It localises to the cell outer membrane. The protein resides in the bacterial flagellum basal body. In terms of biological role, assembles around the rod to form the L-ring and probably protects the motor/basal body from shearing forces during rotation. In Pseudomonas putida (strain ATCC 700007 / DSM 6899 / JCM 31910 / BCRC 17059 / LMG 24140 / F1), this protein is Flagellar L-ring protein.